Reading from the N-terminus, the 386-residue chain is Endonuclease III homolog 2, chloroplastic (386 aa).

A chloroplast-targeting transit peptide spans 1–50 (MILTGAASTFPIVARVLNAMNRRMYAATTLSSAKSISAESLNLRSDSNSE). The disordered stretch occupies residues 44-66 (RSDSNSEAAHGASESETRVSLRK). The 27-residue stretch at 252 to 278 (YDGDIPRTLEELLSLPGVGPKIAHLVL) folds into the HhH domain. Catalysis depends on Lys-272, which acts as the Nucleophile; for N-glycosylase activity. [4Fe-4S] cluster-binding residues include Cys-347, Cys-354, Cys-357, and Cys-363.

This sequence belongs to the Nth/MutY family. [4Fe-4S] cluster serves as cofactor.

Its subcellular location is the plastid. The protein localises to the chloroplast stroma. The protein resides in the chloroplast nucleoid. It carries out the reaction 2'-deoxyribonucleotide-(2'-deoxyribose 5'-phosphate)-2'-deoxyribonucleotide-DNA = a 3'-end 2'-deoxyribonucleotide-(2,3-dehydro-2,3-deoxyribose 5'-phosphate)-DNA + a 5'-end 5'-phospho-2'-deoxyribonucleoside-DNA + H(+). Bifunctional DNA N-glycosylase with associated apurinic/apyrimidinic (AP) lyase function that catalyzes the first step in base excision repair (BER), the primary repair pathway for the repair of oxidative DNA damage. The DNA N-glycosylase activity releases the damaged DNA base from DNA by cleaving the N-glycosidic bond, leaving an AP site. The AP lyase activity cleaves the phosphodiester bond 3' to the AP site by a beta-elimination. Primarily recognizes and repairs oxidative base damage of pyrimidines. The polypeptide is Endonuclease III homolog 2, chloroplastic (NTH2) (Arabidopsis thaliana (Mouse-ear cress)).